The primary structure comprises 140 residues: MEAIAKLIKVQLPNYLQKLPVPSSLSGFAELSPSDAIAVVFPFAVVSWLIGYSTYKFFQPKAVELPPSPKAKDTNCVNKCIDKTCKKVVHTVDIEDVGEKLVFCRCWRSKKFPYCDGSHNNHNEQEQDNVGPLIVKGKAN.

Over 1-35 the chain is Lumenal; sequence MEAIAKLIKVQLPNYLQKLPVPSSLSGFAELSPSD. The chain crosses the membrane as a helical span at residues 36-59; it reads AIAVVFPFAVVSWLIGYSTYKFFQ. Over 60-140 the chain is Cytoplasmic; sequence PKAVELPPSP…GPLIVKGKAN (81 aa). Residues cysteine 104, cysteine 106, cysteine 115, and histidine 119 each contribute to the [2Fe-2S] cluster site.

The protein belongs to the CISD protein family. CISD2 subfamily. [2Fe-2S] cluster serves as cofactor.

The protein localises to the endoplasmic reticulum membrane. In Trichoplax adhaerens (Trichoplax reptans), this protein is CDGSH iron-sulfur domain-containing protein 2 homolog.